The following is a 107-amino-acid chain: Large ribosomal subunit protein uL23 (107 aa).

The protein belongs to the universal ribosomal protein uL23 family. In terms of assembly, part of the 50S ribosomal subunit. Contacts protein L29, and trigger factor when it is bound to the ribosome.

Its function is as follows. One of the early assembly proteins it binds 23S rRNA. One of the proteins that surrounds the polypeptide exit tunnel on the outside of the ribosome. Forms the main docking site for trigger factor binding to the ribosome. In Gluconobacter oxydans (strain 621H) (Gluconobacter suboxydans), this protein is Large ribosomal subunit protein uL23.